The chain runs to 840 residues: OTU domain-containing protein 7B (840 aa).

The interval 49 to 88 (AGNLSPPFSGGSTCPKTPEKGGSDREPTRPSRPILQRQDD) is disordered. Positions 65–77 (TPEKGGSDREPTR) are enriched in basic and acidic residues. Residue Ser100 is modified to Phosphoserine. The TRAF-binding stretch occupies residues 152-401 (ERDLIEQSML…AVDPGKGWEW (250 aa)). The interval 167 to 440 (AGRLNWWVSM…VKWIPLSSDS (274 aa)) is catalytic. The OTU domain occupies 183–365 (LLPLATTGDG…QAHFSALVSM (183 aa)). A regulatory loop region spans residues 187–193 (ATTGDGN). Asp191 is a catalytic residue. Cys194 serves as the catalytic Nucleophile. The Proton acceptor role is filled by His358. Over residues 440–452 (SQAPLAQPESPTA) the composition is skewed to polar residues. 2 disordered regions span residues 440-592 (SQAP…YSQE) and 653-710 (IMNG…VHCQ). 2 stretches are compositionally biased toward basic and acidic residues: residues 456–471 (DEPR…DKES) and 488–500 (SKRD…KRAD). Phosphoserine occurs at positions 464, 467, and 471. Residues 483 to 498 (RRKEKSKRDREKDKKR) carry the Nuclear localization signal motif. The segment covering 531-541 (KPGGLGSGSGI) has biased composition (gly residues). Position 730 is a phosphothreonine (Thr730). The A20-type zinc-finger motif lies at 793 to 828 (PPTQTKCKQPNCSFYGHPETNNLCSCCYREELRRRE). Zn(2+)-binding residues include Cys799, Cys804, Cys816, and Cys819.

Belongs to the peptidase C64 family. In terms of assembly, interacts with TRAF6. Interacts with PARK7, leading to inhibit deubiquitinase activity. Interacts with EGFR, ITCH and NEDD4. Interacts with TRAF3. Interacts with ZAP70 in activated T cells, but not in resting T cells. Phosphorylated by EGFR.

The protein localises to the cytoplasm. It is found in the nucleus. It carries out the reaction Thiol-dependent hydrolysis of ester, thioester, amide, peptide and isopeptide bonds formed by the C-terminal Gly of ubiquitin (a 76-residue protein attached to proteins as an intracellular targeting signal).. With respect to regulation, deubiquitinase activity is inhibited following interaction with PARK7. In terms of biological role, negative regulator of the non-canonical NF-kappa-B pathway that acts by mediating deubiquitination of TRAF3, an inhibitor of the NF-kappa-B pathway, thereby acting as a negative regulator of B-cell responses. In response to non-canonical NF-kappa-B stimuli, deubiquitinates 'Lys-48'-linked polyubiquitin chains of TRAF3, preventing TRAF3 proteolysis and over-activation of non-canonical NF-kappa-B. Negatively regulates mucosal immunity against infections. Deubiquitinates ZAP70, and thereby regulates T cell receptor (TCR) signaling that leads to the activation of NF-kappa-B. Plays a role in T cell homeostasis and is required for normal T cell responses, including production of IFNG and IL2. Mediates deubiquitination of EGFR. Has deubiquitinating activity toward 'Lys-11', 'Lys-48' and 'Lys-63'-linked polyubiquitin chains. Has a much higher catalytic rate with 'Lys-11'-linked polyubiquitin chains (in vitro); however the physiological significance of these data are unsure. Hydrolyzes both linear and branched forms of polyubiquitin. Acts as a regulator of mTORC1 and mTORC2 assembly by mediating 'Lys-63'-linked deubiquitination of MLST8, thereby promoting assembly of the mTORC2 complex, while inibiting formation of the mTORC1 complex. The sequence is that of OTU domain-containing protein 7B (Otud7b) from Mus musculus (Mouse).